We begin with the raw amino-acid sequence, 303 residues long: Mycothiol acetyltransferase (303 aa).

N-acetyltransferase domains lie at 3–152 and 155–303; these read VTVT…VSLP and VRIR…MYRS. Residue aspartate 35 participates in 1D-myo-inositol 2-(L-cysteinylamino)-2-deoxy-alpha-D-glucopyranoside binding. 79 to 81 contributes to the acetyl-CoA binding site; the sequence is LTV. 1D-myo-inositol 2-(L-cysteinylamino)-2-deoxy-alpha-D-glucopyranoside contacts are provided by glutamate 182, lysine 224, and glutamate 237. Residues 241–243 and 248–254 each bind acetyl-CoA; these read VGV and QGSGLGR. Tyrosine 275 provides a ligand contact to 1D-myo-inositol 2-(L-cysteinylamino)-2-deoxy-alpha-D-glucopyranoside.

The protein belongs to the acetyltransferase family. MshD subfamily. In terms of assembly, monomer.

It carries out the reaction 1D-myo-inositol 2-(L-cysteinylamino)-2-deoxy-alpha-D-glucopyranoside + acetyl-CoA = mycothiol + CoA + H(+). Catalyzes the transfer of acetyl from acetyl-CoA to desacetylmycothiol (Cys-GlcN-Ins) to form mycothiol. The sequence is that of Mycothiol acetyltransferase from Kocuria rhizophila (strain ATCC 9341 / DSM 348 / NBRC 103217 / DC2201).